The chain runs to 99 residues: Putative protein tag-209 (99 aa).

The N-terminal stretch at Met1–Ser16 is a signal peptide.

The chain is Putative protein tag-209 (tag-209) from Caenorhabditis elegans.